Reading from the N-terminus, the 251-residue chain is Glucosamine-6-phosphate deaminase (251 aa).

The Proton acceptor; for enolization step role is filled by D67. Residue N136 is the For ring-opening step of the active site. H138 (proton acceptor; for ring-opening step) is an active-site residue. The active-site For ring-opening step is E143.

It belongs to the glucosamine/galactosamine-6-phosphate isomerase family. NagB subfamily.

It catalyses the reaction alpha-D-glucosamine 6-phosphate + H2O = beta-D-fructose 6-phosphate + NH4(+). It functions in the pathway amino-sugar metabolism; N-acetylneuraminate degradation; D-fructose 6-phosphate from N-acetylneuraminate: step 5/5. Catalyzes the reversible isomerization-deamination of glucosamine 6-phosphate (GlcN6P) to form fructose 6-phosphate (Fru6P) and ammonium ion. The chain is Glucosamine-6-phosphate deaminase from Geobacillus sp. (strain WCH70).